The chain runs to 116 residues: Bacterial microcompartment shell protein CutR (116 aa).

The BMC circularly permuted domain maps to 10–108 (RIIQESVPGK…LEYFKNSLGF (99 aa)).

Belongs to the EutS/PduU family. Has been crystallized in 5 structures (all are mutated, 3 have an N-terminal His-tag), most are homohexameric with a central pore. In two the homohexamer lies flat with a beta-barrel on the flat face created by the protruding N termini of the six chains. In 2 others the hexamer is not flat but has a six-fold screw axis; the screw pitch is 33.8 or 41.9 Angstroms depending on the structure. Interacts with the BMC major shell protein.

Its subcellular location is the bacterial microcompartment. Its pathway is amine and polyamine metabolism; choline degradation. A minor shell protein of the choline degradation-specific bacterial microcompartment (BMC). Proteins such as this one with circularly permuted BMC domains may play a key role in conferring heterogeneity and flexibility in this BMC. The polypeptide is Bacterial microcompartment shell protein CutR (Streptococcus intermedius (strain ATCC 27335 / DSM 20573 / CCUG 32759 / CIP 103248 / JCM 12996 / LMG 17840 / NCTC 11324 / SK54 / 1877)).